The chain runs to 115 residues: Large ribosomal subunit protein bL19 (115 aa).

The protein belongs to the bacterial ribosomal protein bL19 family.

This protein is located at the 30S-50S ribosomal subunit interface and may play a role in the structure and function of the aminoacyl-tRNA binding site. The protein is Large ribosomal subunit protein bL19 of Koribacter versatilis (strain Ellin345).